The following is a 198-amino-acid chain: Protein GrpE (198 aa).

It belongs to the GrpE family. As to quaternary structure, homodimer.

It is found in the cytoplasm. Its function is as follows. Participates actively in the response to hyperosmotic and heat shock by preventing the aggregation of stress-denatured proteins, in association with DnaK and GrpE. It is the nucleotide exchange factor for DnaK and may function as a thermosensor. Unfolded proteins bind initially to DnaJ; upon interaction with the DnaJ-bound protein, DnaK hydrolyzes its bound ATP, resulting in the formation of a stable complex. GrpE releases ADP from DnaK; ATP binding to DnaK triggers the release of the substrate protein, thus completing the reaction cycle. Several rounds of ATP-dependent interactions between DnaJ, DnaK and GrpE are required for fully efficient folding. The sequence is that of Protein GrpE from Actinobacillus pleuropneumoniae serotype 3 (strain JL03).